Consider the following 76-residue polypeptide: UPF0248 protein MmarC7_1289 (76 aa).

This sequence belongs to the UPF0248 family.

This chain is UPF0248 protein MmarC7_1289, found in Methanococcus maripaludis (strain C7 / ATCC BAA-1331).